The following is a 211-amino-acid chain: Ribosomal RNA small subunit methyltransferase G (211 aa).

S-adenosyl-L-methionine contacts are provided by residues Gly72, Phe77, 125–126 (IE), and Arg141.

This sequence belongs to the methyltransferase superfamily. RNA methyltransferase RsmG family.

The protein localises to the cytoplasm. It carries out the reaction guanosine(527) in 16S rRNA + S-adenosyl-L-methionine = N(7)-methylguanosine(527) in 16S rRNA + S-adenosyl-L-homocysteine. Its function is as follows. Specifically methylates the N7 position of guanine in position 527 of 16S rRNA. The sequence is that of Ribosomal RNA small subunit methyltransferase G from Allorhizobium ampelinum (strain ATCC BAA-846 / DSM 112012 / S4) (Agrobacterium vitis (strain S4)).